The following is a 556-amino-acid chain: Formate--tetrahydrofolate ligase (556 aa).

65-72 contacts ATP; sequence TPAGEGKS.

Belongs to the formate--tetrahydrofolate ligase family.

The catalysed reaction is (6S)-5,6,7,8-tetrahydrofolate + formate + ATP = (6R)-10-formyltetrahydrofolate + ADP + phosphate. It participates in one-carbon metabolism; tetrahydrofolate interconversion. In Streptococcus agalactiae serotype V (strain ATCC BAA-611 / 2603 V/R), this protein is Formate--tetrahydrofolate ligase.